The following is a 191-amino-acid chain: UPF0398 protein LSEI_1479 (191 aa).

This sequence belongs to the UPF0398 family.

This chain is UPF0398 protein LSEI_1479, found in Lacticaseibacillus paracasei (strain ATCC 334 / BCRC 17002 / CCUG 31169 / CIP 107868 / KCTC 3260 / NRRL B-441) (Lactobacillus paracasei).